Here is a 104-residue protein sequence, read N- to C-terminus: Phosphoribosyl-ATP pyrophosphatase (104 aa).

Belongs to the PRA-PH family.

The protein localises to the cytoplasm. The enzyme catalyses 1-(5-phospho-beta-D-ribosyl)-ATP + H2O = 1-(5-phospho-beta-D-ribosyl)-5'-AMP + diphosphate + H(+). It functions in the pathway amino-acid biosynthesis; L-histidine biosynthesis; L-histidine from 5-phospho-alpha-D-ribose 1-diphosphate: step 2/9. The polypeptide is Phosphoribosyl-ATP pyrophosphatase (Rhizobium rhizogenes (strain K84 / ATCC BAA-868) (Agrobacterium radiobacter)).